A 73-amino-acid chain; its full sequence is UPF0346 protein SSP1318 (73 aa).

The protein belongs to the UPF0346 family.

In Staphylococcus saprophyticus subsp. saprophyticus (strain ATCC 15305 / DSM 20229 / NCIMB 8711 / NCTC 7292 / S-41), this protein is UPF0346 protein SSP1318.